A 138-amino-acid chain; its full sequence is Putative membrane protein ORF6 (138 aa).

2 helical membrane passes run 4 to 20 (LTII…HAVL) and 37 to 53 (VVVL…LMTI).

It is found in the membrane. This is Putative membrane protein ORF6 (ORF6) from Ictalurid herpesvirus 1 (strain Auburn) (IcHV-1).